Reading from the N-terminus, the 392-residue chain is Elongation factor Tu 2 (392 aa).

The tr-type G domain occupies 10–201 (KPHVNIGTIG…AVDSYIPTPE (192 aa)). The segment at 19-26 (GHVDHGKT) is G1. 19–26 (GHVDHGKT) contributes to the GTP binding site. Residue T26 participates in Mg(2+) binding. Positions 55 to 59 (GITIS) are G2. The tract at residues 76–79 (DCPG) is G3. GTP-binding positions include 76-80 (DCPGH) and 131-134 (NKVD). Residues 131–134 (NKVD) form a G4 region. Residues 169-171 (SAL) form a G5 region.

This sequence belongs to the TRAFAC class translation factor GTPase superfamily. Classic translation factor GTPase family. EF-Tu/EF-1A subfamily. As to quaternary structure, monomer.

Its subcellular location is the cytoplasm. It catalyses the reaction GTP + H2O = GDP + phosphate + H(+). Its function is as follows. GTP hydrolase that promotes the GTP-dependent binding of aminoacyl-tRNA to the A-site of ribosomes during protein biosynthesis. The polypeptide is Elongation factor Tu 2 (Rhizobium etli (strain ATCC 51251 / DSM 11541 / JCM 21823 / NBRC 15573 / CFN 42)).